The primary structure comprises 157 residues: Transcriptional repressor NrdR (157 aa).

A zinc finger spans residues 3 to 34 (CPFCRHPDSRVVDSRTSDDGLSIRRRRQCPEC). The 91-residue stretch at 46–136 (LSVIKRNGVV…VYQGFDSLDD (91 aa)) folds into the ATP-cone domain.

Belongs to the NrdR family. Zn(2+) is required as a cofactor.

In terms of biological role, negatively regulates transcription of bacterial ribonucleotide reductase nrd genes and operons by binding to NrdR-boxes. This Clavibacter michiganensis subsp. michiganensis (strain NCPPB 382) protein is Transcriptional repressor NrdR.